The sequence spans 234 residues: Thymidylate kinase (234 aa).

11–18 is an ATP binding site; that stretch reads GLEGSGKT.

This sequence belongs to the thymidylate kinase family.

The catalysed reaction is dTMP + ATP = dTDP + ADP. In terms of biological role, phosphorylation of dTMP to form dTDP in both de novo and salvage pathways of dTTP synthesis. The polypeptide is Thymidylate kinase (Wigglesworthia glossinidia brevipalpis).